A 343-amino-acid chain; its full sequence is Nuclear distribution protein nudE-like 1 (343 aa).

The stretch at 25–190 (KYKQSFQEAR…LAVRERQQEV (166 aa)) forms a coiled coil. Disordered stretches follow at residues 184 to 204 (RERQ…LDCE) and 322 to 343 (QGTP…PLSV).

It belongs to the nudE family. Post-translationally, phosphorylated in mitosis.

The protein localises to the cytoplasm. The protein resides in the cytoskeleton. Its subcellular location is the microtubule organizing center. It is found in the centrosome. It localises to the spindle. In terms of biological role, required for organization of the cellular microtubule array and microtubule anchoring at the centrosome. Positively regulates the activity of the minus-end directed microtubule motor protein dynein. May enhance dynein-mediated microtubule sliding by targeting dynein to the microtubule plus end. Positively regulates lysosome peripheral distribution and ruffled border formation in osteoclasts. This chain is Nuclear distribution protein nudE-like 1 (NDEL1), found in Gallus gallus (Chicken).